A 421-amino-acid polypeptide reads, in one-letter code: MSDPRYCAEIISVGTELLLGNILNSNAQFLAEELAQLGIPHYFQTVVGDNRDRLQSAVKIAAERSGLLIFTGGLGPTPDDLTTETLAACFETHLAERPEVITDIEAKFTRRGRVLTDNNRKQALLPVGAELLPNPSGTAPGMIRSPRSGLTLMTFPGVPAEMRRMWTETAVPWLHQNDWCRSILVSRLLRFWGISESALAEKVAPFFDLQNPTVAPYANNGEVKLRITAAAASEAEGVALIAPIEQELRAIAGRDCYGADNDSLASVVGALLHDRGQTLAVAESCTGGGLGQLITTIPGSSQWFWGGVIAYDNRVKQSLLNVSAETLAEAGAVSAVVAEQMAIGIQQRLGTTWGVSITGIAGPDGGTETKPVGLVYIGIAGPTGCFGVERRWGAERGRDWVRRLSAGEALDQLRRSLLNLT.

The protein belongs to the CinA family.

In Synechococcus sp. (strain ATCC 27144 / PCC 6301 / SAUG 1402/1) (Anacystis nidulans), this protein is CinA-like protein.